Here is a 377-residue protein sequence, read N- to C-terminus: Nitric oxide reductase FlRd-NAD(+) reductase (377 aa).

It belongs to the FAD-dependent oxidoreductase family. Requires FAD as cofactor.

The protein localises to the cytoplasm. The enzyme catalyses 2 reduced [nitric oxide reductase rubredoxin domain] + NAD(+) + H(+) = 2 oxidized [nitric oxide reductase rubredoxin domain] + NADH. It functions in the pathway nitrogen metabolism; nitric oxide reduction. In terms of biological role, one of at least two accessory proteins for anaerobic nitric oxide (NO) reductase. Reduces the rubredoxin moiety of NO reductase. The sequence is that of Nitric oxide reductase FlRd-NAD(+) reductase from Klebsiella pneumoniae subsp. pneumoniae (strain ATCC 700721 / MGH 78578).